The chain runs to 210 residues: dITP/XTP pyrophosphatase (210 aa).

Residue S16–K21 participates in substrate binding. D79 serves as the catalytic Proton acceptor. Position 79 (D79) interacts with Mg(2+). Substrate is bound by residues S80, F166–D169, K189, and H194–R195.

Belongs to the HAM1 NTPase family. In terms of assembly, homodimer. It depends on Mg(2+) as a cofactor.

The catalysed reaction is XTP + H2O = XMP + diphosphate + H(+). The enzyme catalyses dITP + H2O = dIMP + diphosphate + H(+). It catalyses the reaction ITP + H2O = IMP + diphosphate + H(+). Pyrophosphatase that catalyzes the hydrolysis of nucleoside triphosphates to their monophosphate derivatives, with a high preference for the non-canonical purine nucleotides XTP (xanthosine triphosphate), dITP (deoxyinosine triphosphate) and ITP. Seems to function as a house-cleaning enzyme that removes non-canonical purine nucleotides from the nucleotide pool, thus preventing their incorporation into DNA/RNA and avoiding chromosomal lesions. The sequence is that of dITP/XTP pyrophosphatase from Acinetobacter baylyi (strain ATCC 33305 / BD413 / ADP1).